The primary structure comprises 300 residues: Ribosomal protein bS6--L-glutamate ligase (300 aa).

The region spanning 104–287 (LQLLARQGID…IAGRMIQWIE (184 aa)) is the ATP-grasp domain. ATP is bound by residues Lys141, 178–179 (EY), Asp187, and 211–213 (RSN). Asp248, Glu260, and Asn262 together coordinate Mg(2+). Residues Asp248, Glu260, and Asn262 each coordinate Mn(2+).

It belongs to the RimK family. Mg(2+) serves as cofactor. Requires Mn(2+) as cofactor.

Its function is as follows. An L-glutamate ligase that catalyzes the ATP-dependent post-translational addition of glutamate residues to the C-terminus of ribosomal protein bS6 (RpsF). Is also able to catalyze the synthesis of poly-alpha-glutamate in vitro, via ATP hydrolysis from unprotected glutamate as substrate. The number of glutamate residues added to either RpsF or to poly-alpha-glutamate changes with pH. The protein is Ribosomal protein bS6--L-glutamate ligase of Salmonella schwarzengrund (strain CVM19633).